We begin with the raw amino-acid sequence, 705 residues long: Calpastatin (705 aa).

2 disordered regions span residues 1–211 (MNPT…PNDA) and 226–493 (LTTC…PLPP). Basic and acidic residues-rich tracts occupy residues 7-17 (KAVKTEPEKKP) and 24-62 (VVHE…EKAV). A Glycyl lysine isopeptide (Lys-Gly) (interchain with G-Cter in SUMO2) cross-link involves residue lysine 10. N6-acetyllysine is present on lysine 28. Low complexity-rich tracts occupy residues 63–72 (SKSSEQPPSE) and 94–103 (PAAAAAASAE). At serine 65 the chain carries Phosphoserine. Residue threonine 115 is modified to Phosphothreonine. Acidic residues predominate over residues 135-151 (TALDDLIDTLGEPEEMK). Residues 149–202 (EMKEDNTTYTGPEVSDPMSSTYIEELGKRESTPPPKYKELLNKEEGIAGPPPDS) form an Inhibitory domain 1 repeat. A compositionally biased stretch (basic and acidic residues) spans 173–194 (ELGKRESTPPPKYKELLNKEEG). A phosphoserine mark is found at serine 202 and serine 230. Residues 234–248 (DGKETEKEKSTEEAL) are compositionally biased toward basic and acidic residues. Polar residues predominate over residues 275 to 286 (TEQALQALSASL). 2 stretches are compositionally biased toward basic and acidic residues: residues 289–317 (RKPE…KKCG) and 327–352 (YRLK…KPLS). An Inhibitory domain 2 repeat occupies 292–344 (EPELDPSSIREVDEAKAKEEKVKKCGEDEETVPSEYRLKPATDKDGKPLLPEA). 3 positions are modified to phosphoserine: serine 352, serine 354, and serine 361. The segment covering 355-364 (ELIDELSEDF) has biased composition (acidic residues). Residues 365-381 (DQSKPTEKQSKPTEKTE) are compositionally biased toward basic and acidic residues. Serine 428 is modified (phosphoserine). Residues 430-489 (PKKEADPEDGKPVEDKVKEKAKEEDRENFGEKEETIPPDYRLEEAKDKDGKPLLPKEVKE) are compositionally biased toward basic and acidic residues. The stretch at 434 to 487 (ADPEDGKPVEDKVKEKAKEEDRENFGEKEETIPPDYRLEEAKDKDGKPLLPKEV) is one Inhibitory domain 3 repeat. Serine 504 and serine 515 each carry phosphoserine. The tract at residues 527–705 (VSEVVSQTPA…KPKADGKSTS (179 aa)) is disordered. Low complexity predominate over residues 533–542 (QTPAPTTQAA). A Phosphoserine modification is found at serine 563. An Inhibitory domain 4 repeat occupies 571 to 624 (PDPDENKPVEDKVKEKAKAEHRDKLGERDDTIPPKYQHLLDDNKEGTPGKPKDQ). Positions 571–625 (PDPDENKPVEDKVKEKAKAEHRDKLGERDDTIPPKYQHLLDDNKEGTPGKPKDQR) are enriched in basic and acidic residues. Over residues 651–662 (DSCPSTTETSTD) the composition is skewed to low complexity. Residues 683–705 (KAKDSTKAKEETSKPKADGKSTS) are compositionally biased toward basic and acidic residues.

Belongs to the protease inhibitor I27 (calpastatin) family.

Its function is as follows. Specific inhibition of calpain (calcium-dependent cysteine protease). Plays a key role in postmortem tenderization of meat and have been proposed to be involved in muscle protein degradation in living tissue. This Bos taurus (Bovine) protein is Calpastatin (CAST).